A 244-amino-acid chain; its full sequence is tRNA1(Val) (adenine(37)-N6)-methyltransferase (244 aa).

This sequence belongs to the methyltransferase superfamily. tRNA (adenine-N(6)-)-methyltransferase family.

Its subcellular location is the cytoplasm. It carries out the reaction adenosine(37) in tRNA1(Val) + S-adenosyl-L-methionine = N(6)-methyladenosine(37) in tRNA1(Val) + S-adenosyl-L-homocysteine + H(+). Functionally, specifically methylates the adenine in position 37 of tRNA(1)(Val) (anticodon cmo5UAC). This Photorhabdus laumondii subsp. laumondii (strain DSM 15139 / CIP 105565 / TT01) (Photorhabdus luminescens subsp. laumondii) protein is tRNA1(Val) (adenine(37)-N6)-methyltransferase.